The primary structure comprises 117 residues: Large ribosomal subunit protein uL23 (117 aa).

This sequence belongs to the universal ribosomal protein uL23 family. In terms of assembly, part of the 50S ribosomal subunit. Contacts protein L29, and trigger factor when it is bound to the ribosome.

Its function is as follows. One of the early assembly proteins it binds 23S rRNA. One of the proteins that surrounds the polypeptide exit tunnel on the outside of the ribosome. Forms the main docking site for trigger factor binding to the ribosome. This chain is Large ribosomal subunit protein uL23, found in Acetivibrio thermocellus (strain ATCC 27405 / DSM 1237 / JCM 9322 / NBRC 103400 / NCIMB 10682 / NRRL B-4536 / VPI 7372) (Clostridium thermocellum).